A 159-amino-acid polypeptide reads, in one-letter code: Cyclic pyranopterin monophosphate synthase (159 aa).

Substrate-binding positions include 75–77 (LCH) and 113–114 (ME). Asp128 is a catalytic residue.

The protein belongs to the MoaC family. In terms of assembly, homohexamer; trimer of dimers.

The enzyme catalyses (8S)-3',8-cyclo-7,8-dihydroguanosine 5'-triphosphate = cyclic pyranopterin phosphate + diphosphate. It functions in the pathway cofactor biosynthesis; molybdopterin biosynthesis. In terms of biological role, catalyzes the conversion of (8S)-3',8-cyclo-7,8-dihydroguanosine 5'-triphosphate to cyclic pyranopterin monophosphate (cPMP). This is Cyclic pyranopterin monophosphate synthase from Cupriavidus necator (strain ATCC 17699 / DSM 428 / KCTC 22496 / NCIMB 10442 / H16 / Stanier 337) (Ralstonia eutropha).